The primary structure comprises 208 residues: Protein Nef (208 aa).

A lipid anchor (N-myristoyl glycine; by host) is attached at glycine 2. Serine 6 bears the Phosphoserine; by host mark. A disordered region spans residues 16–51 (IRERMRRTPPTPPAAEGVGAVSQDLERRGAITSSNT). The interval 65–68 (EEDE) is acidic; interacts with host PACS1 and PACS2; stabilizes the interaction of NEF/MHC-I with host AP1M1; necessary for MHC-I internalization. Residues 72 to 81 (PVRPQVPLRP) are SH3-binding; interaction with Src family tyrosine kinases. The PxxP; stabilizes the interaction of NEF/MHC-I with host AP1M1; necessary for MHC-I internalization motif lies at 75-78 (PQVP). The segment at 111 to 127 (EILDLWVYHTQGYFPDW) is mediates dimerization, Nef-PTE1 interaction. The tract at residues 151-183 (VDPEEVEKANEGENNCLLHPMSQHGMEDEDKEV) is binding to ATP6V1H. The Dileucine internalization motif; necessary for CD4 internalization signature appears at 167 to 168 (LL). The Diacidic; necessary for CD4 internalization signature appears at 177 to 178 (ED).

This sequence belongs to the lentivirus primate group Nef protein family. As to quaternary structure, monomer; cytosolic form. Homodimer; membrane bound form. Interacts with Nef associated p21-activated kinase (PAK2); this interaction activates PAK2. Associates with the Nef-MHC-I-AP1 complex; this complex is required for MHC-I internalization. Interacts (via C-terminus) with host PI3-kinase. Interacts with host PACS1; this interaction seems to be weak. Interacts with host PACS2. Interacts with host LCK and MAPK3; these interactions inhibit the kinase activity of the latter. Interacts with host ATP6V1H; this interaction may play a role in CD4 endocytosis. Associates with the CD4-Nef-AP2 complex; this complex is required for CD4 internalization. Interacts with host AP2 subunit alpha and AP2 subunit sigma2. Interacts with TCR-zeta chain; this interaction up-regulates the Fas ligand (FasL) surface expression. Interacts with host HCK, LYN, and SRC; these interactions activate the Src family kinases. Interacts with MAP3K5; this interaction inhibits the Fas and TNFR-mediated death signals. Interacts with beta-COP and PTE1. Interacts with human RACK1; this increases Nef phosphorylation by PKC. Interacts with TP53; this interaction decreases the half-life of TP53, protecting the infected cell against p53-mediated apoptosis. In terms of processing, the virion-associated Nef proteins are cleaved by the viral protease to release the soluble C-terminal core protein. Nef is probably cleaved concomitantly with viral structural proteins on maturation of virus particles. Myristoylated. Post-translationally, phosphorylated on serine residues, probably by host PKCdelta and theta.

Its subcellular location is the host cell membrane. It localises to the virion. The protein resides in the secreted. The protein localises to the host Golgi apparatus membrane. Functionally, factor of infectivity and pathogenicity, required for optimal virus replication. Alters numerous pathways of T-lymphocyte function and down-regulates immunity surface molecules in order to evade host defense and increase viral infectivity. Alters the functionality of other immunity cells, like dendritic cells, monocytes/macrophages and NK cells. In terms of biological role, in infected CD4(+) T-lymphocytes, down-regulates the surface MHC-I, mature MHC-II, CD4, CD28, CCR5 and CXCR4 molecules. Mediates internalization and degradation of host CD4 through the interaction of with the cytoplasmic tail of CD4, the recruitment of AP-2 (clathrin adapter protein complex 2), internalization through clathrin coated pits, and subsequent transport to endosomes and lysosomes for degradation. Diverts host MHC-I molecules to the trans-Golgi network-associated endosomal compartments by an endocytic pathway to finally target them for degradation. MHC-I down-regulation may involve AP-1 (clathrin adapter protein complex 1) or possibly Src family kinase-ZAP70/Syk-PI3K cascade recruited by PACS2. In consequence infected cells are masked for immune recognition by cytotoxic T-lymphocytes. Decreasing the number of immune receptors also prevents reinfection by more HIV particles (superinfection). Down-regulates host SERINC3 and SERINC5 thereby excluding these proteins from the viral particles. Virion infectivity is drastically higher when SERINC3 or SERINC5 are excluded from the viral envelope, because these host antiviral proteins impair the membrane fusion event necessary for subsequent virion penetration. Its function is as follows. Bypasses host T-cell signaling by inducing a transcriptional program nearly identical to that of anti-CD3 cell activation. Interaction with TCR-zeta chain up-regulates the Fas ligand (FasL). Increasing surface FasL molecules and decreasing surface MHC-I molecules on infected CD4(+) cells send attacking cytotoxic CD8+ T-lymphocytes into apoptosis. Plays a role in optimizing the host cell environment for viral replication without causing cell death by apoptosis. Protects the infected cells from apoptosis in order to keep them alive until the next virus generation is ready to strike. Inhibits the Fas and TNFR-mediated death signals by blocking MAP3K5/ASK1. Decreases the half-life of TP53, protecting the infected cell against p53-mediated apoptosis. Inhibits the apoptotic signals regulated by the Bcl-2 family proteins through the formation of a Nef/PI3-kinase/PAK2 complex that leads to activation of PAK2 and induces phosphorylation of host BAD. Functionally, extracellular Nef protein targets CD4(+) T-lymphocytes for apoptosis by interacting with CXCR4 surface receptors. This Human immunodeficiency virus type 1 group M subtype F1 (isolate 93BR020) (HIV-1) protein is Protein Nef.